The sequence spans 301 residues: Phospholipase A1 VesT1.02 (301 aa).

6 disulfide bridges follow: Cys87-Cys294, Cys176-Cys245, Cys181-Cys262, Cys219-Cys228, Cys240-Cys246, and Cys267-Cys269. Residue Ser137 is the Nucleophile of the active site. Residue Asp165 is the Charge relay system of the active site. His230 functions as the Charge relay system in the catalytic mechanism.

This sequence belongs to the AB hydrolase superfamily. Lipase family. Post-translationally, is not glycosylated. As to expression, expressed by the venom gland.

It is found in the secreted. It carries out the reaction a 1,2-diacyl-sn-glycero-3-phosphocholine + H2O = a 2-acyl-sn-glycero-3-phosphocholine + a fatty acid + H(+). Catalyzes the hydrolysis of phosphatidylcholine with phospholipase A1 activity. Shows hemolytic activity. The chain is Phospholipase A1 VesT1.02 from Vespa tropica (Greater banded hornet).